The chain runs to 800 residues: DNA topoisomerase 4 subunit A (800 aa).

One can recognise a Topo IIA-type catalytic domain in the interval 31-495 (LPDVRDGLKP…EIEEIKIDKE (465 aa)). Tyr119 functions as the O-(5'-phospho-DNA)-tyrosine intermediate in the catalytic mechanism.

Belongs to the type II topoisomerase GyrA/ParC subunit family. ParC type 2 subfamily. As to quaternary structure, heterotetramer composed of ParC and ParE.

The protein resides in the cell membrane. The enzyme catalyses ATP-dependent breakage, passage and rejoining of double-stranded DNA.. Topoisomerase IV is essential for chromosome segregation. It relaxes supercoiled DNA. Performs the decatenation events required during the replication of a circular DNA molecule. In Staphylococcus aureus (strain MSSA476), this protein is DNA topoisomerase 4 subunit A.